Consider the following 161-residue polypeptide: Large-conductance mechanosensitive channel (161 aa).

The next 2 helical transmembrane spans lie at 21 to 41 and 79 to 99; these read VGVI…DGVI and GAFI…FLLV. Positions 142-154 are enriched in low complexity; the sequence is TAAPKAAAAPVAK. Positions 142–161 are disordered; sequence TAAPKAAAAPVAKPKTKPKA.

The protein belongs to the MscL family. As to quaternary structure, homopentamer.

Its subcellular location is the cell inner membrane. Functionally, channel that opens in response to stretch forces in the membrane lipid bilayer. May participate in the regulation of osmotic pressure changes within the cell. In Caulobacter sp. (strain K31), this protein is Large-conductance mechanosensitive channel.